Consider the following 311-residue polypeptide: Dehydrogenase/reductase SDR family member 7C (311 aa).

An N-terminal signal peptide occupies residues 1–18; sequence MGLMAVLMLPLLLLGISG. NAD(+) contacts are provided by Ser47, Leu49, Tyr191, Lys195, and Ser226. The Proton acceptor role is filled by Tyr191.

It belongs to the short-chain dehydrogenases/reductases (SDR) family. In terms of tissue distribution, expressed in skeletal muscle and cardiac muscle. Also expressed in liver, kidney, adipocytes and skin.

The protein resides in the sarcoplasmic reticulum membrane. It carries out the reaction all-trans-retinol + NAD(+) = all-trans-retinal + NADH + H(+). Its function is as follows. NADH-dependent oxidoreductase which catalyzes the oxidation of all-trans-retinol to all-trans-retinal. Plays a role in the regulation of cardiac and skeletal muscle metabolic functions. Maintains Ca(2+) intracellular homeostasis by repressing Ca(2+) release from the sarcoplasmic reticulum (SR) in myotubes, possibly through local alternations in NAD/NADH or retinol/retinal. Also plays a role in Ca(2+) homeostasis by controlling Ca(2+) overload in the cytosol and the SR in myotubes. Involved in glucose uptake into skeletal muscles and muscle performance by activating PI3K and mTORC2-mediated AKT1 phosphorylation signaling pathways, possibly through the action of its downstream catalytic product all-trans-retinoic acid. The polypeptide is Dehydrogenase/reductase SDR family member 7C (Mus musculus (Mouse)).